A 276-amino-acid chain; its full sequence is MAASTLYKSCLLQPKSGSTTRRLNPSLVNPLTNPTRVSVLGKSRRDVFAKASIEMAESNSIPSVVVNSSKQHGPIIVIDNYDSFTYNLCQYMGELGCHFEVYRNDELTVEELKKKNPRGVLISPGPGTPQDSGISLQTVLELGPLVPLFGVCMGLQCIGEAFGGKIVRSPFGVMHGKSSMVHYDEKGEEGLFSGLSNPFIVGRYHSLVIEKDTFPSDELEVTAWTEDGLVMAARHRKYKHIQGVQFHPESIITTEGKTIVRNFIKIVEKKESEKLT.

The N-terminal 50 residues, 1 to 50, are a transit peptide targeting the chloroplast; that stretch reads MAASTLYKSCLLQPKSGSTTRRLNPSLVNPLTNPTRVSVLGKSRRDVFAK. One can recognise a Glutamine amidotransferase type-1 domain in the interval 74–273; that stretch reads PIIVIDNYDS…IKIVEKKESE (200 aa). Cys152 (nucleophile) is an active-site residue. Residues His247 and Glu249 contribute to the active site.

In terms of assembly, heterotetramer consisting of two non-identical subunits: a beta subunit and a large alpha subunit. In terms of tissue distribution, expressed in the central cylinder of mature primary root zones, including pericycle and early lateral root primordia, and vasculature of cotyledons.

The protein resides in the plastid. The protein localises to the chloroplast. The catalysed reaction is chorismate + L-glutamine = anthranilate + pyruvate + L-glutamate + H(+). It functions in the pathway amino-acid biosynthesis; L-tryptophan biosynthesis; L-tryptophan from chorismate: step 1/5. Its function is as follows. Part of a heterotetrameric complex that catalyzes the two-step biosynthesis of anthranilate, an intermediate in the biosynthesis of L-tryptophan. In the first step, the glutamine-binding beta subunit of anthranilate synthase (AS) provides the glutamine amidotransferase activity which generates ammonia as a substrate that, along with chorismate, is used in the second step, catalyzed by the large alpha subunit of AS to produce anthranilate. Plays an important regulatory role in auxin production via the tryptophan-dependent biosynthetic pathway. The protein is Anthranilate synthase beta subunit 1, chloroplastic (ASB1) of Arabidopsis thaliana (Mouse-ear cress).